The sequence spans 374 residues: Phosphomevalonate kinase (374 aa).

This sequence belongs to the GHMP kinase family. In terms of assembly, homodimer. Mg(2+) serves as cofactor.

It carries out the reaction (R)-5-phosphomevalonate + ATP = (R)-5-diphosphomevalonate + ADP. It participates in isoprenoid biosynthesis; isopentenyl diphosphate biosynthesis via mevalonate pathway; isopentenyl diphosphate from (R)-mevalonate: step 2/3. Its function is as follows. Catalyzes the phosphorylation of (R)-mevalonate 5-phosphate (MVAP) to (R)-mevalonate 5-diphosphate (MVAPP). Functions in the mevalonate (MVA) pathway leading to isopentenyl diphosphate (IPP), a key precursor for the biosynthesis of isoprenoid compounds. The chain is Phosphomevalonate kinase from Streptomyces sp. (strain CL190).